Reading from the N-terminus, the 154-residue chain is Deoxyuridine 5'-triphosphate nucleotidohydrolase (154 aa).

Substrate is bound by residues 64–66, N77, 81–83, and K91; these read RSG and TID.

The protein belongs to the dUTPase family. Homotrimer. Mg(2+) is required as a cofactor.

The catalysed reaction is dUTP + H2O = dUMP + diphosphate + H(+). The protein operates within pyrimidine metabolism; dUMP biosynthesis; dUMP from dCTP (dUTP route): step 2/2. Functionally, this enzyme is involved in nucleotide metabolism: it produces dUMP, the immediate precursor of thymidine nucleotides and it decreases the intracellular concentration of dUTP so that uracil cannot be incorporated into DNA. This chain is Deoxyuridine 5'-triphosphate nucleotidohydrolase, found in Mycobacterium marinum (strain ATCC BAA-535 / M).